A 758-amino-acid chain; its full sequence is Transcription activator MSS11 (758 aa).

Residues 1-23 (MDNTTNINTNERSSNTDFSSAPN) form a disordered region. Positions 51-83 (SKQLLYAHIYNYLIKNNYWNSAAKFLSEADLPL) constitute a LisH domain. 5 disordered regions span residues 191-220 (TQNS…TNRN), 268-299 (LQSP…QQQQ), 322-355 (QQHQ…GLMP), 428-454 (GNQN…NANG), and 587-681 (KTNT…TKES). Polar residues predominate over residues 207–220 (DGSNFNLNDPTNRN). The segment covering 269–299 (QSPAQPQQSSQQQIQQPQHQPQHQPQQQQQQ) has biased composition (low complexity). Composition is skewed to polar residues over residues 345 to 355 (SENSHSTGLMP), 436 to 454 (TRNN…NANG), and 587 to 600 (KTNT…STSV). Over residues 605–664 (NNNNNNNNNNNNNNNNNSNNSNNNNNNNNNNNNSNNTPTVSQPSSKCTSSSSTTPNITTT) the composition is skewed to low complexity. Positions 667–676 (PKRKQRVGKT) are enriched in basic residues.

Belongs to the MSS11 family. Interacts with FLO8, STE12 and TEC1.

It is found in the cytoplasm. The protein localises to the nucleus. In terms of biological role, transcription factor that regulates pseudohyphal differentiation, invasive growth, floculation, adhesion and starch metabolism in response to nutrient availability. This Saccharomyces cerevisiae (strain ATCC 204508 / S288c) (Baker's yeast) protein is Transcription activator MSS11 (MSS11).